Reading from the N-terminus, the 174-residue chain is Ribulose bisphosphate carboxylase small subunit, chloroplastic 1 (174 aa).

A chloroplast-targeting transit peptide spans 1 to 45 (MAPAVMASSATTVAPFQGLKSTAGLPVSRRSRGSLGSVSNGGRIR).

It belongs to the RuBisCO small chain family. In terms of assembly, heterohexadecamer of 8 large and 8 small subunits.

Its subcellular location is the plastid. It is found in the chloroplast. In terms of biological role, ruBisCO catalyzes two reactions: the carboxylation of D-ribulose 1,5-bisphosphate, the primary event in carbon dioxide fixation, as well as the oxidative fragmentation of the pentose substrate. Both reactions occur simultaneously and in competition at the same active site. Although the small subunit is not catalytic it is essential for maximal activity. The polypeptide is Ribulose bisphosphate carboxylase small subunit, chloroplastic 1 (Triticum aestivum (Wheat)).